The chain runs to 33 residues: Gastrin (33 aa).

Q1 carries the post-translational modification Pyrrolidone carboxylic acid. The residue at position 33 (F33) is a Phenylalanine amide.

Belongs to the gastrin/cholecystokinin family.

The protein resides in the secreted. Functionally, gastrin stimulates the stomach mucosa to produce and secrete hydrochloric acid and the pancreas to secrete its digestive enzymes. It also stimulates smooth muscle contraction and increases blood circulation and water secretion in the stomach and intestine. This is Gastrin (GAST) from Cavia porcellus (Guinea pig).